Here is a 364-residue protein sequence, read N- to C-terminus: MKKAILMMTFGSPEEIIFEGVADFFTNIRRGVRPQDHEIQTLYDNYVRIGGTPLQKITRQEVALVEARLGSEYSVYFANKFSSPFIPDVIGQMEADGIEQCICLILEPHYSFYSVMGYEKFLESKQIQFLVIKDWYQEEALLNYWADEIAKILKEEVKQDSFKVIFSAHSVPIFALDFGDPYIDQIFENSKLVAEKLGLSSEQYTNTWQSESDIGIPWIKPDVLEYLREQTEHPDHYIFVPISFISEHIEVLFDNDVECYDLCQEFGVNYHRPPMPNTDSRLIDALVNTVRVNENQEFKEFLPEEETFDELVPSDETKNILAESQDLQMPEFVKKLIEKKGRENVKMPYLIKKMLEKAGKLPKE.

Fe-coproporphyrin III-binding residues include Arg29 and Tyr118. Fe(2+) contacts are provided by His169 and Glu250.

This sequence belongs to the ferrochelatase family.

It is found in the cytoplasm. It catalyses the reaction Fe-coproporphyrin III + 2 H(+) = coproporphyrin III + Fe(2+). Its pathway is porphyrin-containing compound metabolism; protoheme biosynthesis. In terms of biological role, involved in coproporphyrin-dependent heme b biosynthesis. Catalyzes the insertion of ferrous iron into coproporphyrin III to form Fe-coproporphyrin III. This Streptococcus pneumoniae serotype 4 (strain ATCC BAA-334 / TIGR4) protein is Coproporphyrin III ferrochelatase.